We begin with the raw amino-acid sequence, 337 residues long: L-Ala-D/L-amino acid epimerase (337 aa).

Substrate contacts are provided by residues Thr-129 and 151-153 (KIK). Mg(2+) contacts are provided by Asp-177, Glu-203, and Asp-228. Residues Lys-250 and 300–302 (DMD) contribute to the substrate site.

Belongs to the mandelate racemase/muconate lactonizing enzyme family. Mg(2+) is required as a cofactor.

Its function is as follows. Broad specificity dipeptide epimerase. Catalyzes the epimerization of L-Ala-L-Ala, L-Ala-L-Glu, L-Ala-L-Ser, L-Ala-L-Thr and L-Ala-L-Met (in vitro). This chain is L-Ala-D/L-amino acid epimerase, found in Maribacter sp. (strain HTCC2170 / KCCM 42371).